Reading from the N-terminus, the 121-residue chain is Protransforming growth factor alpha (121 aa).

Residue Leu1 is a signal peptide. Positions Glu2–Ala16 are cleaved as a propeptide — removed in mature form. The Extracellular segment spans residues Glu2–Gln75. The N-linked (GlcNAc...) asparagine glycan is linked to Asn3. The 41-residue stretch at His20–Glu60 folds into the EGF-like domain. 3 disulfides stabilise this stretch: Cys24–Cys37, Cys32–Cys48, and Cys50–Cys59. Positions Val67–Ser121 are cleaved as a propeptide — removed in mature form. A helical membrane pass occupies residues Ala76 to Cys101.

In terms of assembly, interacts with the PDZ domains of MAGI3, SDCBP and SNTA1. The interaction with SDCBP, is required for the targeting to the cell surface. In the endoplasmic reticulum, in its immature form (i.e. with a prosegment and lacking full N-glycosylation), interacts with CNIH. In the Golgi apparatus, may form a complex with CNIH and GORASP2. Interacts (via cytoplasmic C-terminal domain) with NKD2. As to expression, hypothalamus.

The protein resides in the secreted. Its subcellular location is the extracellular space. It localises to the cell membrane. In terms of biological role, TGF alpha is a mitogenic polypeptide that is able to bind to the EGF receptor/EGFR and to act synergistically with TGF beta to promote anchorage-independent cell proliferation in soft agar. This Macaca mulatta (Rhesus macaque) protein is Protransforming growth factor alpha (TGFA).